The following is a 66-amino-acid chain: UPF0370 protein YpfN (66 aa).

Residues 4–24 (LAKYWWILVLVFLVGVLLNVI) form a helical membrane-spanning segment. Positions 39–66 (KPELPPHRDFNDKWDDEDDWPKKDQPKK) are disordered. The span at 42–51 (LPPHRDFNDK) shows a compositional bias: basic and acidic residues.

The protein belongs to the UPF0370 family.

It localises to the cell membrane. The sequence is that of UPF0370 protein YpfN from Salmonella paratyphi C (strain RKS4594).